Consider the following 369-residue polypeptide: Ubiquitin-conjugating enzyme E2 Q2 (369 aa).

The disordered stretch occupies residues 117–143; the sequence is DQPLPTGQNGTTEEVTSEEEEEEEMAE. Residues 131–143 are compositionally biased toward acidic residues; it reads VTSEEEEEEEMAE. Residues 198-362 form the UBC core domain; it reads QASDRLMKEL…VQIHEKNGWY (165 aa). Catalysis depends on Cys-298, which acts as the Glycyl thioester intermediate.

The protein belongs to the ubiquitin-conjugating enzyme family. In terms of processing, auto-ubiquitinated in vitro. Detected at embryo implantation sites in the luminal epithelium of pregnant endometrium. Detected at low levels in ovary and liver.

The protein resides in the cytoplasm. The catalysed reaction is S-ubiquitinyl-[E1 ubiquitin-activating enzyme]-L-cysteine + [E2 ubiquitin-conjugating enzyme]-L-cysteine = [E1 ubiquitin-activating enzyme]-L-cysteine + S-ubiquitinyl-[E2 ubiquitin-conjugating enzyme]-L-cysteine.. It functions in the pathway protein modification; protein ubiquitination. In terms of biological role, accepts ubiquitin from the E1 complex and catalyzes its covalent attachment to other proteins. In vitro catalyzes 'Lys-48'-linked polyubiquitination. The chain is Ubiquitin-conjugating enzyme E2 Q2 (UBE2Q2) from Oryctolagus cuniculus (Rabbit).